We begin with the raw amino-acid sequence, 663 residues long: MENATQPVPLIELRDIRKRYGGNGTPEVEVLKGVSLSIHAGEFVAIVGASGSGKSTLMNILGCLDRPSSGSYHFAGHDVAELDSDEQAWLRREAFGFVFQGYHLIPSASAQENVEMPAIYAGIPASERHTRARALLERLGLAERTANRPHQLSGGQQQRVSIARALMNGGHIILADEPTGALDSHSGAEVMALLDELASQGHVVILITHDRDVAARAKRIIEVRDGEIVSDSANDERPAHPSAGVERHLQADDLSQRLAEGSSEPSGAWRAELLEAVRAAWRVMWINRFRTALTLLGIIIGVASVVVMLAVGEGSKRQVMAQMGAFGSNIIYLSGYSPNPRAPMGIVSSDDVAAIATLPQVKKVMPVNGGELVVRYGNIDYHAYVGGNNTDFPEILNWPVAEGSYFTERDEDAATTVAVIGYKVRKKLFGSANPIGRYILIENVPFQVIGVLAEKGSSSGDKDADNRIAIPYSAASIRLFGTRNPEYVIIAAADAQRVHQAERAIDQLMLRLHRGQRDYELTNNAAMIQAEAKTQNTLSLMLGSIAAISLLVGGIGVMNIMLMTVRERTREIGIRMATGARQGDILRQFLTEAAMLSVVGGLAGIALALCIGGVLLLGQVAVAFSLSAIVGAFSCALVTGLVFGFMPARKAAQLDPVAALASQ.

An ABC transporter domain is found at 11 to 250; the sequence is IELRDIRKRY…PSAGVERHLQ (240 aa). An ATP-binding site is contributed by 48 to 55; sequence GASGSGKS. The next 4 membrane-spanning stretches (helical) occupy residues 292–312, 545–565, 598–618, and 626–646; these read ALTL…LAVG, IAAI…LMTV, VVGG…LLLG, and LSAI…FGFM.

Belongs to the ABC transporter superfamily. Macrolide exporter (TC 3.A.1.122) family. Part of the tripartite efflux system PvdRT-OpmQ, which is composed of an inner membrane component with both ATPase and permease domains, PvdT, a periplasmic membrane fusion protein, PvdR, and an outer membrane component, OpmQ.

It localises to the cell inner membrane. Part of the tripartite efflux system PvdRT-OpmQ required for the secretion into the extracellular milieu of the siderophore pyoverdine (PVD), which is involved in iron acquisition. This subunit binds PVD and drives its secretion by hydrolyzing ATP. The system is responsible for export of newly synthesized PVD after the final steps of biosynthesis have taken place in the periplasm. It is also responsible for recycling of PVD after internalization of ferri-PVD into the periplasm by the outer-membrane receptor FpvA and release of iron from PVD, thus making PVD available for new cycles of iron uptake. In addition, can expel unwanted metals complexed with PVD from the periplasm into the extracellular medium. In Pseudomonas aeruginosa (strain ATCC 15692 / DSM 22644 / CIP 104116 / JCM 14847 / LMG 12228 / 1C / PRS 101 / PAO1), this protein is Pyoverdine export ATP-binding/permease protein PvdT.